The chain runs to 977 residues: Kinesin-like protein KIN-14D (977 aa).

A compositionally biased stretch (low complexity) spans M1–S13. The tract at residues M1–R20 is disordered. Residues S17–G118 form the Calponin-homology (CH) domain. A coiled-coil region spans residues K297 to L384. Positions N472 to V800 constitute a Kinesin motor domain. G556 to T563 serves as a coordination point for ATP. Positions K812–S847 form a coiled coil. A disordered region spans residues P852–P977. Polar residues-rich tracts occupy residues K861–G879 and R956–P977.

This sequence belongs to the TRAFAC class myosin-kinesin ATPase superfamily. Kinesin family. KIN-14 subfamily.

This Oryza sativa subsp. japonica (Rice) protein is Kinesin-like protein KIN-14D.